A 232-amino-acid polypeptide reads, in one-letter code: Dehydrin DHN2 (232 aa).

Over residues 1-12 (MSQYQNQYGAQT) the composition is skewed to polar residues. 3 disordered regions span residues 1 to 92 (MSQY…STNT), 131 to 156 (PGTE…SGGG), and 173 to 232 (PGDK…CTGH). A compositionally biased stretch (gly residues) spans 73–82 (THTGGVGGYG). The segment covering 131-140 (PGTEQSRTHT) has biased composition (basic and acidic residues). Over residues 143 to 156 (TGYGSTGYGASGGG) the composition is skewed to gly residues. Residues 200-223 (YVREEHRVDHGEKKGIMDKIKEKL) show a composition bias toward basic and acidic residues.

The protein belongs to the plant dehydrin family.

This Pisum sativum (Garden pea) protein is Dehydrin DHN2 (DHN2).